The sequence spans 81 residues: ATP synthase subunit c (81 aa).

2 consecutive transmembrane segments (helical) span residues 5–25 and 57–77; these read VAAA…IGPG and LAFM…LLFA.

Belongs to the ATPase C chain family. F-type ATPases have 2 components, F(1) - the catalytic core - and F(0) - the membrane proton channel. F(1) has five subunits: alpha(3), beta(3), gamma(1), delta(1), epsilon(1). F(0) has four main subunits: a(1), b(1), b'(1) and c(10-14). The alpha and beta chains form an alternating ring which encloses part of the gamma chain. F(1) is attached to F(0) by a central stalk formed by the gamma and epsilon chains, while a peripheral stalk is formed by the delta, b and b' chains.

It localises to the cellular thylakoid membrane. In terms of biological role, f(1)F(0) ATP synthase produces ATP from ADP in the presence of a proton or sodium gradient. F-type ATPases consist of two structural domains, F(1) containing the extramembraneous catalytic core and F(0) containing the membrane proton channel, linked together by a central stalk and a peripheral stalk. During catalysis, ATP synthesis in the catalytic domain of F(1) is coupled via a rotary mechanism of the central stalk subunits to proton translocation. Functionally, key component of the F(0) channel; it plays a direct role in translocation across the membrane. A homomeric c-ring of between 10-14 subunits forms the central stalk rotor element with the F(1) delta and epsilon subunits. This chain is ATP synthase subunit c, found in Microcystis aeruginosa (strain NIES-843 / IAM M-2473).